Here is a 517-residue protein sequence, read N- to C-terminus: Cell division cycle protein 73 (517 aa).

The span at 124–135 (SEPEAKKPRLDG) shows a compositional bias: basic and acidic residues. 2 disordered regions span residues 124–159 (SEPEAKKPRLDGEAAGEPMDTSTSDEPQESAVSAAK) and 306–326 (GHHAVQKAPDAPPGRPPLAKP). Residues 315–324 (DAPPGRPPLA) are compositionally biased toward pro residues.

Belongs to the CDC73 family. As to quaternary structure, component of the PAF1 complex which consists of at least cdc-73, ctr-9, leo-1, pafo-1 and rtfo-1.

It localises to the nucleus. Its function is as follows. Component of the PAF1 complex which is a multifunctional complex involved in transcription initiation via genetic interactions with TATA-binding proteins, elongation and transcription-coupled histone modification. The polypeptide is Cell division cycle protein 73 (Caenorhabditis elegans).